The sequence spans 113 residues: DIVITQDELSKPVTSGESVSISCRSSKSLLYKDGKTYLNWFLQGPQQSPRLLIYLMSTRASGVSDRFSGSGSGTDFTLEISRVKAEDVGVYYCQQLVEYPLTFGAGTKLELKR.

The interval 1–23 (DIVITQDELSKPVTSGESVSISC) is framework-1. C23 and C93 form a disulfide bridge. Residues 24–39 (RSSKSLLYKDGKTYLN) form a complementarity-determining-1 region. The tract at residues 40–54 (WFLQGPQQSPRLLIY) is framework-2. Residues 55–61 (LMSTRAS) are complementarity-determining-2. The framework-3 stretch occupies residues 62–93 (GVSDRFSGSGSGTDFTLEISRVKAEDVGVYYC). The segment at 94 to 102 (QQLVEYPLT) is complementarity-determining-3. Positions 103 to 112 (FGAGTKLELK) are framework-4.

The chain is Ig kappa chain V-II region MOPC 511 from Mus musculus (Mouse).